We begin with the raw amino-acid sequence, 397 residues long: Phosphonopyruvate decarboxylase (397 aa).

It belongs to the TPP enzyme family. It depends on thiamine diphosphate as a cofactor. Requires Mg(2+) as cofactor.

It catalyses the reaction 3-phosphonopyruvate + H(+) = phosphonoacetaldehyde + CO2. It functions in the pathway secondary metabolite biosynthesis; bialaphos biosynthesis. In terms of biological role, involved in the biosynthesis of phosphinothricin tripeptide (PTT), also known as bialaphos (BA), a natural-product antibiotic and potent herbicide. Catalyzes the decarboxylation of phosphonopyruvate (PnPy) to generate phosphonoacetaldehyde (PnAA). The sequence is that of Phosphonopyruvate decarboxylase from Streptomyces viridochromogenes (strain DSM 40736 / JCM 4977 / BCRC 1201 / Tue 494).